We begin with the raw amino-acid sequence, 80 residues long: Toxin Acra I-2 (80 aa).

The N-terminal stretch at 1–22 is a signal peptide; the sequence is MMKLALFSIIVILFSLIGSIHG. In terms of domain architecture, LCN-type CS-alpha/beta spans 25-80; the sequence is VPGNYPLDSSGNKYPCTVLGDNQSCIDVCKKHGVKYGYCYSFKCWCEFLEDKNVSI. 3 cysteine pairs are disulfide-bonded: Cys-40/Cys-63, Cys-49/Cys-68, and Cys-53/Cys-70.

Expressed by the venom gland.

The protein localises to the secreted. Probable neurotoxin that inhibits ion channels. Is toxic to mice. Is about 2.8% of the total protein in the venom. The chain is Toxin Acra I-2 from Androctonus crassicauda (Arabian fat-tailed scorpion).